Here is a 237-residue protein sequence, read N- to C-terminus: Cyclic nucleotide phosphodiesterase inhibitor (237 aa).

Positions 1 to 20 (MAKIIISLILLLSLFSFSYG) are cleaved as a signal peptide. N-linked (GlcNAc...) asparagine glycans are attached at residues Asn28, Asn65, and Asn70. 5 Cys-rich CT repeats span residues 57 to 81 (DLCH…CNDN), 82 to 105 (NPCT…CDPG), 116 to 139 (DPCT…CNDG), 140 to 162 (DACT…CDDN), and 163 to 186 (DPCT…CSIK). Asn153 carries N-linked (GlcNAc...) asparagine glycosylation. An N-linked (GlcNAc...) asparagine glycan is attached at Asn207.

In terms of biological role, PDI acts by binding stoichiometrically to cyclic nucleotide phosphodiesterase, changing the KM of the enzyme for cAMP from 10 uM to 2 mM. This chain is Cyclic nucleotide phosphodiesterase inhibitor (pdiA), found in Dictyostelium discoideum (Social amoeba).